The following is a 142-amino-acid chain: Hemoglobin subunit beta-C (142 aa).

The region spanning 1-142 (MPNKALITGF…VASALAHRYH (142 aa)) is the Globin domain. The heme b site is built by H59 and H88.

Belongs to the globin family. As to quaternary structure, heterotetramer of two alpha chains and two beta chains. Red blood cells.

Functionally, involved in oxygen transport from the lung to the various peripheral tissues. The protein is Hemoglobin subunit beta-C (HBBC) of Capra hircus (Goat).